We begin with the raw amino-acid sequence, 1892 residues long: Sodium channel protein type 4 subunit alpha A (1892 aa).

The Cytoplasmic portion of the chain corresponds to 1 to 125 (MATILPPPGT…RGAIKILIHS (125 aa)). The segment at 34–54 (APKAGAHEEEEPPTPNPDLEA) is disordered. The I repeat unit spans residues 107-433 (ILSPFSLVRR…VVAMAYDEQN (327 aa)). A helical membrane pass occupies residues 126 to 144 (LFSTLIMITILSNCVFMTM). Topologically, residues 145-151 (SNPPAWS) are extracellular. The chain crosses the membrane as a helical span at residues 152-172 (KTVEYVFTGIYTFEATVKVLS). Residues 173-186 (RGFCVGPFTFLRDP) are Cytoplasmic-facing. A helical transmembrane segment spans residues 187–204 (WNWLDFMVISMAYITEFV). Residues 205 to 210 (DLGNVS) lie on the Extracellular side of the membrane. The N-linked (GlcNAc...) asparagine glycan is linked to Asn-208. Residues 211–227 (ALRTFRVLRALKTITVI) form a helical membrane-spanning segment. The Cytoplasmic segment spans residues 228-246 (PGLKTIVAALIQSVKKMVD). Residues 247–266 (VMILTVFALAVFALVGLQLF) traverse the membrane as a helical segment. The Extracellular segment spans residues 267 to 370 (MGNLRHKCIR…PNYGYTSFDS (104 aa)). A disulfide bridge connects residues Cys-274 and Cys-339. Asn-281, Asn-294, and Asn-341 each carry an N-linked (GlcNAc...) asparagine glycan. The cysteines at positions 348 and 354 are disulfide-linked. Positions 371–395 (FGWAFLALFRLMTQDNWESLFQLTL) form an intramembrane region, pore-forming. The Extracellular segment spans residues 396 to 402 (RAAGQTY). The helical transmembrane segment at 403 to 423 (MLFFVVVIFLGSFYLINLILA) threads the bilayer. Residues 424-612 (VVAMAYDEQN…KWVHFVVMDP (189 aa)) are Cytoplasmic-facing. An II repeat occupies 594-866 (CCEKWVVFKK…QIAIGRITRG (273 aa)). Residues 613-631 (FVDLAITICIVLNTLFMAM) form a helical membrane-spanning segment. Residues 632–642 (EHYPMTEEFDY) lie on the Extracellular side of the membrane. A helical transmembrane segment spans residues 643 to 662 (MLSVGNLVFTGIFAAEMFFK). The Cytoplasmic portion of the chain corresponds to 663–676 (LIAMDPYYYFQVGW). A helical transmembrane segment spans residues 677–696 (NIFDSIIVTLSLVELGLANV). Topologically, residues 697–698 (QG) are extracellular. A helical membrane pass occupies residues 699-716 (LSVLRSFRLLRVFKLAKS). The Cytoplasmic portion of the chain corresponds to 717 to 732 (WPTLNMLIKIIGNSVG). A helical transmembrane segment spans residues 733-751 (ALGNLTLVLAIIVFIFAVV). At 752–780 (GMQLFGKSYKDCVCKISSDCELPRWHMND) the chain is on the extracellular side. A disulfide bridge connects residues Cys-765 and Cys-771. An intramembrane region (pore-forming) is located at residues 781 to 801 (FFHSFLIVFRILCGEWIETMW). Residues 802 to 812 (DCMEVAGAGMC) lie on the Extracellular side of the membrane. Cys-803 and Cys-812 are joined by a disulfide. Residues 813-831 (LVVFMMVMVIGNLVVLNLF) traverse the membrane as a helical segment. Residues 832-1071 (LALLLSSFSG…TCFTIVEHDW (240 aa)) lie on the Cytoplasmic side of the membrane. Disordered stretches follow at residues 884–905 (REPQ…TEGM) and 945–982 (LGES…GVED). Residues 948 to 971 (SDSENPSEDDDDQEDDVDSEVTCE) are compositionally biased toward acidic residues. An III repeat occupies 1052–1366 (KGKKWWNLRK…KKYYEAMKKL (315 aa)). Residues 1072–1089 (FETFIIFMILLSSGALAF) form a helical membrane-spanning segment. Residues 1090 to 1102 (EDIYIERRRTVKI) lie on the Extracellular side of the membrane. Residues 1103–1121 (VLEFADKVFTFIFVIEMLL) traverse the membrane as a helical segment. Over 1122-1135 (KWVAYGFKTYFTNA) the chain is Cytoplasmic. A helical transmembrane segment spans residues 1136–1154 (WCWLDFFIVDISLISLSAN). The Extracellular segment spans residues 1155–1162 (LMGFSDLG). A helical membrane pass occupies residues 1163–1181 (PIKSLRTLRALRPLRALSR). Residues 1182–1198 (FEGMRVVVNALIGAIPS) lie on the Cytoplasmic side of the membrane. Residues 1199 to 1218 (IFNVLLVCLIFWLIFSIMGV) form a helical membrane-spanning segment. Over 1219–1270 (NLFAGKFYRCINTTTAELFPISVVNNKSDCVALQEATQEARWVNVKVNYDNV) the chain is Extracellular. Residues Cys-1228 and Cys-1248 are joined by a disulfide bond. 2 N-linked (GlcNAc...) asparagine glycosylation sites follow: Asn-1230 and Asn-1244. Residues 1271-1292 (AKGYLSLLQIATFKGWMDIMYP) constitute an intramembrane region (pore-forming). Residues 1293–1309 (AVDSREVEEQPSYEINL) are Extracellular-facing. The chain crosses the membrane as a helical span at residues 1310–1331 (YMYIYFVIFIIFGSFFTLNLFI). The Cytoplasmic portion of the chain corresponds to 1332 to 1394 (GVIIDNFNQQ…LVFDFISQQF (63 aa)). The segment at 1350-1352 (IFM) is important for rapid channel inactivation. Residues 1375–1673 (IPRPANLIQG…WEKFDTGGTQ (299 aa)) form an IV repeat. The helical transmembrane segment at 1395 to 1412 (FDIFIMVLICLNMVTMMV) threads the bilayer. Residues 1413 to 1423 (ETDDQSPAKED) lie on the Extracellular side of the membrane. Residues 1424–1442 (FLFKVNVAFIVVFTGECTL) form a helical membrane-spanning segment. The Cytoplasmic portion of the chain corresponds to 1443 to 1454 (KLFALRHYFFTN). Residues 1455–1472 (GWNIFDFIVVILSIAGTM) traverse the membrane as a helical segment. Over 1473-1485 (LSDIIEKYFVSPT) the chain is Extracellular. Residues 1486 to 1502 (LFRVIRLARIGRILRLI) traverse the membrane as a helical segment. At 1503 to 1521 (KGARGIRTLLFALMMSLPA) the chain is on the cytoplasmic side. Residues 1522–1539 (LFNIGLLLFLIMFIFSIF) traverse the membrane as a helical segment. Over 1540 to 1561 (GMSNFAYVKKEAGINDMFNFET) the chain is Extracellular. The segment at residues 1562–1584 (FGSSIICLFQITTSAGWDTLLLP) is an intramembrane region (pore-forming). Over 1585–1614 (MLNKEPPDCDPAFENPGTDVKGNCGNPMMG) the chain is Extracellular. Residues Cys-1593 and Cys-1608 are joined by a disulfide bond. The chain crosses the membrane as a helical span at residues 1615–1637 (MVFFCSYIIISFLVVVNMYIAII). The Cytoplasmic portion of the chain corresponds to 1638-1892 (LENFNVAQEE…TQTILRETNV (255 aa)). In terms of domain architecture, IQ spans 1767 to 1796 (EDMAAVVIQRAYRNHLHKRGIHHAAYIQRS). The tract at residues 1836–1856 (RRRPDPQTRCSGARCSPEPPE) is disordered.

This sequence belongs to the sodium channel (TC 1.A.1.10) family. Nav1.4/SCN4A subfamily. In terms of assembly, voltage-gated sodium (Nav) channels consist of an ion-conducting alpha subunit which is functional on its own associated with regulatory beta subunits.

It is found in the cell membrane. It carries out the reaction Na(+)(in) = Na(+)(out). Functionally, pore-forming subunit of a voltage-gated sodium (Nav) channel that directly mediates the depolarizing phase of action potentials in excitable membranes. Navs, also called VGSCs (voltage-gated sodium channels) or VDSCs (voltage-dependent sodium channels), operate by switching between closed and open conformations depending on the voltage difference across the membrane. In the open conformation they allow Na(+) ions to selectively pass through the pore, along their electrochemical gradient. The influx of Na+ ions provokes membrane depolarization, initiating the propagation of electrical signals throughout cells and tissues. This Takifugu rubripes (Japanese pufferfish) protein is Sodium channel protein type 4 subunit alpha A (scn4aa).